The chain runs to 433 residues: Sensor protein RstB (433 aa).

At 1–3 (MKK) the chain is on the cytoplasmic side. The helical transmembrane segment at 4 to 24 (LFIQFYLLLFVCFLVMSLLVG) threads the bilayer. Residues 25-135 (LVYKFTAERA…PYLYYLHQMR (111 aa)) lie on the Periplasmic side of the membrane. The helical transmembrane segment at 136–156 (LLDIALIAFIAISLAFPVFIW) threads the bilayer. The Cytoplasmic portion of the chain corresponds to 157-433 (MRPHWQDMLK…WHNIPQFTSA (277 aa)). Residues 158–210 (RPHWQDMLKLEAAAQRFGDGHLNERIHFDEGSSFERLGVAFNQMADNINALIA) enclose the HAMP domain. Positions 218 to 425 (GIAHELRTPL…RFSFSWPLWH (208 aa)) constitute a Histidine kinase domain. Phosphohistidine; by autocatalysis is present on histidine 276.

Post-translationally, autophosphorylated.

It localises to the cell inner membrane. The enzyme catalyses ATP + protein L-histidine = ADP + protein N-phospho-L-histidine.. In terms of biological role, member of the two-component regulatory system RstB/RstA. RstB functions as a membrane-associated protein kinase that phosphorylates RstA. The polypeptide is Sensor protein RstB (rstB) (Escherichia coli (strain K12)).